The primary structure comprises 613 residues: Protein translocase subunit SecD (613 aa).

A run of 6 helical transmembrane segments spans residues 10–30 (ALVV…WFYF), 452–472 (KGTL…VVYY), 477–497 (LVAD…MSMI), 503–523 (LPGI…NVLI), 548–568 (VFWT…VLFQ), and 576–596 (GFAV…IVVT).

It belongs to the SecD/SecF family. SecD subfamily. Forms a complex with SecF. Part of the essential Sec protein translocation apparatus which comprises SecA, SecYEG and auxiliary proteins SecDF-YajC and YidC.

It is found in the cell inner membrane. In terms of biological role, part of the Sec protein translocase complex. Interacts with the SecYEG preprotein conducting channel. SecDF uses the proton motive force (PMF) to complete protein translocation after the ATP-dependent function of SecA. The chain is Protein translocase subunit SecD from Anaeromyxobacter dehalogenans (strain 2CP-C).